The following is a 566-amino-acid chain: Mucin-21 (566 aa).

A signal peptide spans 1-24 (MKMQKGNVLLMFGLLLHLEAATNS). Asn25 carries an N-linked (GlcNAc...) asparagine glycan. The disordered stretch occupies residues 25-68 (NETSTSANTGSSVISSGASTATNSGSSVTSSGVSTATISGSSVT). Topologically, residues 25-479 (NETSTSANTG…KPGGSLVPWE (455 aa)) are extracellular. Repeat copies occupy residues 31–44 (ANTG…GAST), 45–59 (ATNS…GVST), 60–74 (ATIS…GVSI), 75–89 (VTNS…GIST), 90–104 (ATNS…GISI), 105–119 (ATNS…GAST), 120–134 (ATNS…GAST), 135–149 (ATNS…GAST), 150–164 (ATNS…EAST), 165–179 (ATNS…GAST), 180–194 (ATNS…RAST), 195–209 (ATNS…GAST), 210–224 (ATNS…GAGT), 225–239 (ATNS…GAST), 244–254 (ESSTPSSGAGT), 255–269 (ATNS…GAGT), 270–284 (ATNS…GIST), 285–299 (VTNS…GANT), 300–314 (ATNS…GANT), 315–329 (ATNS…GAST), 330–344 (ATNS…GAST), 345–359 (ATNS…GAST), 360–374 (ATNS…GTST), 375–389 (ATNS…GAST), 390–404 (ATTS…GAST), 405–419 (ATNS…GAST), 420–434 (ATNS…GANT), and 435–449 (ATNS…GSGT). Positions 31-435 (ANTGSSVISS…STTSSGANTA (405 aa)) are 28 X 15 AA approximate tandem repeats. A disordered region spans residues 106 to 456 (TNSESSTTSS…SGTAALTGMH (351 aa)). A helical membrane pass occupies residues 480 to 500 (IFLITLVSVVAAVGLFAGLFF). Residues 501 to 566 (CVRNSLSLRN…MEMSGRNSGP (66 aa)) are Cytoplasmic-facing. A cytoplasmic tail region spans residues 521-566 (GLNHGLGPGPGGNHGAPHRPRWSPNWFWRRPVSSIAMEMSGRNSGP).

O-glycosylated. In terms of tissue distribution, expressed in lung, large intestine, thymus, and testis. Expressed in normal and malignant bronchial epithelial cells.

Its subcellular location is the cell membrane. In Homo sapiens (Human), this protein is Mucin-21 (MUC21).